A 305-amino-acid chain; its full sequence is Glycine--tRNA ligase alpha subunit (305 aa).

Belongs to the class-II aminoacyl-tRNA synthetase family. Tetramer of two alpha and two beta subunits.

The protein resides in the cytoplasm. The enzyme catalyses tRNA(Gly) + glycine + ATP = glycyl-tRNA(Gly) + AMP + diphosphate. The polypeptide is Glycine--tRNA ligase alpha subunit (Streptococcus uberis (strain ATCC BAA-854 / 0140J)).